The chain runs to 258 residues: Large ribosomal subunit protein uL3 (258 aa).

Belongs to the universal ribosomal protein uL3 family. In terms of assembly, part of the 50S ribosomal subunit. Forms a cluster with proteins L14 and L19.

Functionally, one of the primary rRNA binding proteins, it binds directly near the 3'-end of the 23S rRNA, where it nucleates assembly of the 50S subunit. The sequence is that of Large ribosomal subunit protein uL3 from Spiroplasma kunkelii.